The chain runs to 400 residues: Tryptophan synthase beta chain (400 aa).

At lysine 90 the chain carries N6-(pyridoxal phosphate)lysine.

The protein belongs to the TrpB family. Tetramer of two alpha and two beta chains. Pyridoxal 5'-phosphate serves as cofactor.

The catalysed reaction is (1S,2R)-1-C-(indol-3-yl)glycerol 3-phosphate + L-serine = D-glyceraldehyde 3-phosphate + L-tryptophan + H2O. It participates in amino-acid biosynthesis; L-tryptophan biosynthesis; L-tryptophan from chorismate: step 5/5. In terms of biological role, the beta subunit is responsible for the synthesis of L-tryptophan from indole and L-serine. The sequence is that of Tryptophan synthase beta chain from Alkaliphilus metalliredigens (strain QYMF).